Reading from the N-terminus, the 155-residue chain is 3-dehydroquinate dehydratase (155 aa).

Tyr22 functions as the Proton acceptor in the catalytic mechanism. Substrate contacts are provided by Asn73, His79, and Asp86. His99 (proton donor) is an active-site residue. Substrate-binding positions include 100–101 (IS) and Arg110.

Belongs to the type-II 3-dehydroquinase family. As to quaternary structure, homododecamer.

The catalysed reaction is 3-dehydroquinate = 3-dehydroshikimate + H2O. It functions in the pathway metabolic intermediate biosynthesis; chorismate biosynthesis; chorismate from D-erythrose 4-phosphate and phosphoenolpyruvate: step 3/7. In terms of biological role, catalyzes a trans-dehydration via an enolate intermediate. This is 3-dehydroquinate dehydratase from Campylobacter hominis (strain ATCC BAA-381 / DSM 21671 / CCUG 45161 / LMG 19568 / NCTC 13146 / CH001A).